We begin with the raw amino-acid sequence, 151 residues long: Mini-ribonuclease 3 (151 aa).

The active site involves Asp-30.

Belongs to the MrnC RNase family. Homodimer. It depends on Mg(2+) as a cofactor.

It is found in the cytoplasm. Involved in correct processing of both the 5' and 3' ends of 23S rRNA precursor. Processes 30S rRNA precursor transcript even in absence of ribonuclease 3 (Rnc); Rnc processes 30S rRNA into smaller rRNA precursors. The chain is Mini-ribonuclease 3 from Thermosynechococcus vestitus (strain NIES-2133 / IAM M-273 / BP-1).